Consider the following 193-residue polypeptide: dTTP/UTP pyrophosphatase (193 aa).

The active-site Proton acceptor is the aspartate 71.

The protein belongs to the Maf family. YhdE subfamily. It depends on a divalent metal cation as a cofactor.

It localises to the cytoplasm. It carries out the reaction dTTP + H2O = dTMP + diphosphate + H(+). The enzyme catalyses UTP + H2O = UMP + diphosphate + H(+). Functionally, nucleoside triphosphate pyrophosphatase that hydrolyzes dTTP and UTP. May have a dual role in cell division arrest and in preventing the incorporation of modified nucleotides into cellular nucleic acids. The protein is dTTP/UTP pyrophosphatase of Dictyoglomus thermophilum (strain ATCC 35947 / DSM 3960 / H-6-12).